Consider the following 155-residue polypeptide: Molybdopterin synthase catalytic subunit 2 (155 aa).

Substrate contacts are provided by residues 101–102 (HR), Lys117, and 124–126 (KKE).

Belongs to the MoaE family. MOCS2B subfamily. In terms of assembly, heterotetramer; composed of 2 small (MOCS2A) and 2 large (MOCS2B) subunits.

It localises to the cytoplasm. The catalysed reaction is 2 [molybdopterin-synthase sulfur-carrier protein]-C-terminal-Gly-aminoethanethioate + cyclic pyranopterin phosphate + H2O = molybdopterin + 2 [molybdopterin-synthase sulfur-carrier protein]-C-terminal Gly-Gly + 2 H(+). It participates in cofactor biosynthesis; molybdopterin biosynthesis. In terms of biological role, catalytic subunit of the molybdopterin synthase complex, a complex that catalyzes the conversion of precursor Z into molybdopterin. Acts by mediating the incorporation of 2 sulfur atoms from thiocarboxylated MOCS2A into precursor Z to generate a dithiolene group. The chain is Molybdopterin synthase catalytic subunit 2 from Aedes aegypti (Yellowfever mosquito).